A 247-amino-acid polypeptide reads, in one-letter code: tRNA pseudouridine synthase A (247 aa).

The active-site Nucleophile is the Asp52. Tyr110 is a substrate binding site.

This sequence belongs to the tRNA pseudouridine synthase TruA family. In terms of assembly, homodimer.

The enzyme catalyses uridine(38/39/40) in tRNA = pseudouridine(38/39/40) in tRNA. In terms of biological role, formation of pseudouridine at positions 38, 39 and 40 in the anticodon stem and loop of transfer RNAs. The sequence is that of tRNA pseudouridine synthase A from Hyphomonas neptunium (strain ATCC 15444).